The primary structure comprises 1028 residues: Formin-like protein 3 (1028 aa).

Glycine 2 is lipidated: N-myristoyl glycine. The 447-residue stretch at 26–472 (MPMPEPCELE…EAFQRRCHLE (447 aa)) folds into the GBD/FH3 domain. Threonine 95 carries the post-translational modification Phosphothreonine. Residue serine 174 is modified to Phosphoserine. Residues 493–541 (ELSEGMPPSDLDLLAPAPPPEEVLPLPPPPAPPLPPPPPPLPDKCPPAP) form a disordered region. A compositionally biased stretch (pro residues) spans 508 to 541 (PAPPPEEVLPLPPPPAPPLPPPPPPLPDKCPPAP). Residues 561 to 951 (IKKPIKTKFR…MREKQLAQEA (391 aa)) enclose the FH2 domain. The region spanning 986–1018 (YEGKDGTIEDIITVLKSVPFTARTAKRGSRFFC) is the DAD domain. At serine 1014 the chain carries Phosphoserine.

The protein belongs to the formin homology family. In terms of assembly, interacts with SRGAP2 (via SH3 domain). In terms of tissue distribution, expressed in endothelial cells.

It is found in the cytoplasm. The protein resides in the cell membrane. Its function is as follows. Plays a role in the regulation of cell morphology and cytoskeletal organization. Required in the control of cell shape and migration. Required for developmental angiogenesis. In this process, required for microtubule reorganization and for efficient endothelial cell elongation. In quiescent endothelial cells, triggers rearrangement of the actin cytoskeleton, but does not alter microtubule alignement. The polypeptide is Formin-like protein 3 (FMNL3) (Homo sapiens (Human)).